A 212-amino-acid polypeptide reads, in one-letter code: Histidine biosynthesis bifunctional protein HisIE (212 aa).

Residues 1-109 are phosphoribosyl-AMP cyclohydrolase; the sequence is MRPDFHKQEL…ELIPFDDSDI (109 aa). Positions 110–212 are phosphoribosyl-ATP pyrophosphohydrolase; that stretch reads FSELEKQIID…KKEFHTRTAD (103 aa).

It in the N-terminal section; belongs to the PRA-CH family. This sequence in the C-terminal section; belongs to the PRA-PH family.

The protein localises to the cytoplasm. The catalysed reaction is 1-(5-phospho-beta-D-ribosyl)-ATP + H2O = 1-(5-phospho-beta-D-ribosyl)-5'-AMP + diphosphate + H(+). The enzyme catalyses 1-(5-phospho-beta-D-ribosyl)-5'-AMP + H2O = 1-(5-phospho-beta-D-ribosyl)-5-[(5-phospho-beta-D-ribosylamino)methylideneamino]imidazole-4-carboxamide. It participates in amino-acid biosynthesis; L-histidine biosynthesis; L-histidine from 5-phospho-alpha-D-ribose 1-diphosphate: step 2/9. The protein operates within amino-acid biosynthesis; L-histidine biosynthesis; L-histidine from 5-phospho-alpha-D-ribose 1-diphosphate: step 3/9. The sequence is that of Histidine biosynthesis bifunctional protein HisIE (hisI) from Lactococcus lactis subsp. lactis (strain IL1403) (Streptococcus lactis).